The primary structure comprises 435 residues: Cytochrome c oxidase subunit 3 (435 aa).

The next 7 membrane-spanning stretches (helical) occupy residues 70–90 (VAPL…FGVI), 96–116 (LLIA…SIIF), 132–152 (LVMG…SFFW), 176–196 (VYSY…SGAI), 325–345 (LYFT…EYFF), 360–380 (FLLT…IGII), and 412–432 (LFYW…IYWW).

This sequence belongs to the cytochrome c oxidase subunit 3 family. Component of the cytochrome c oxidase (complex IV, CIV), a multisubunit enzyme composed of a catalytic core of 3 subunits and several supernumerary subunits. The complex exists as a monomer or a dimer and forms supercomplexes (SCs) in the inner mitochondrial membrane with ubiquinol-cytochrome c oxidoreductase (cytochrome b-c1 complex, complex III, CIII).

The protein localises to the mitochondrion inner membrane. It catalyses the reaction 4 Fe(II)-[cytochrome c] + O2 + 8 H(+)(in) = 4 Fe(III)-[cytochrome c] + 2 H2O + 4 H(+)(out). In terms of biological role, component of the cytochrome c oxidase, the last enzyme in the mitochondrial electron transport chain which drives oxidative phosphorylation. The respiratory chain contains 3 multisubunit complexes succinate dehydrogenase (complex II, CII), ubiquinol-cytochrome c oxidoreductase (cytochrome b-c1 complex, complex III, CIII) and cytochrome c oxidase (complex IV, CIV), that cooperate to transfer electrons derived from NADH and succinate to molecular oxygen, creating an electrochemical gradient over the inner membrane that drives transmembrane transport and the ATP synthase. Cytochrome c oxidase is the component of the respiratory chain that catalyzes the reduction of oxygen to water. Electrons originating from reduced cytochrome c in the intermembrane space (IMS) are transferred via the dinuclear copper A center (CU(A)) of subunit 2 and heme A of subunit 1 to the active site in subunit 1, a binuclear center (BNC) formed by heme A3 and copper B (CU(B)). The BNC reduces molecular oxygen to 2 water molecules using 4 electrons from cytochrome c in the IMS and 4 protons from the mitochondrial matrix. This is Cytochrome c oxidase subunit 3 (cox3) from Dictyostelium discoideum (Social amoeba).